Consider the following 383-residue polypeptide: Putative gustatory receptor 22c (383 aa).

The Cytoplasmic segment spans residues 1-11 (MFASRSDLQSR). The helical transmembrane segment at 12–32 (LCWIILKATLYSSWFLGVFPY) threads the bilayer. Residues 33–45 (RFDSRNGQLKRSR) are Extracellular-facing. Residues 46–66 (FLLFYGLILNFFLLLKMVCSG) traverse the membrane as a helical segment. The Cytoplasmic segment spans residues 67–86 (GQKLGIPEAFARNSVLENTH). A helical transmembrane segment spans residues 87–107 (YTTGMLAVFSCVVIHFLNFWG). At 108–144 (STRVQDLANELLVLEYQQFASLNETKCPKFNSFVIQK) the chain is on the extracellular side. Residue N130 is glycosylated (N-linked (GlcNAc...) asparagine). A helical membrane pass occupies residues 145–165 (WLSVIGLLLSYLSIAYGLPGN). The Cytoplasmic segment spans residues 166–250 (NFSVEMVLIN…YMVATYEYHM (85 aa)). Residues 251-271 (TLVLTTGLASNFLAIYSWIVL) traverse the membrane as a helical segment. Topologically, residues 272 to 279 (DISMNINF) are extracellular. The helical transmembrane segment at 280–300 (IYLLIFPLFLLVNVWNLWLSI) threads the bilayer. The Cytoplasmic segment spans residues 301–360 (AASDLAENAGKSTQTVLKLFADLEVKDIELERSVNEFALLCGHCQFNFHVCGLFTINYKM). A helical transmembrane segment spans residues 361-381 (GFQMIITSFLYLIYMIQFDFM). Topologically, residues 382–383 (NL) are extracellular.

It belongs to the insect chemoreceptor superfamily. Gustatory receptor (GR) family. Gr22e subfamily. Taste bristles in the foreleg and labial palps.

The protein resides in the cell membrane. Probable gustatory receptor which mediates acceptance or avoidance behavior, depending on its substrates. This is Putative gustatory receptor 22c (Gr22c) from Drosophila melanogaster (Fruit fly).